The following is a 764-amino-acid chain: MTTAHILGFPRIGAQRELKFALERYWRDGASADAERALVDTGRALRAEHWRIERDAGLDCVTVGDFAWYDHVLTTLAHVGGLPRRFGFDARALTLADYFAAARGNAAQPAMEMTKWFDTNYHYLVPEYSPATTFGPGVEWLFDEVREARALGHRAKAALVGPLTLLWLGKARDGLVERLALLPRLVPAYRALLARLREAGVDWVQIDEPIFSLDLPDAWRDAARPTYEALAPGAPKLLVATYFDDASEHAALLKALPVAGLHVDLVRADAQLDAFVADYPADKVLSCGIVDGRNVWRNDLDRSLARLAPVRDALGERLWVATSCSLLHVPVDLAHEPRLDEELKTWLAFAAQKTREVAALRDALVKGRAAVAAEFDDAAAAAAARRTSARIHNPLVKRRVAALTDADARRASAYSVRAAAQRARFGLPLLPTTTIGSFPQTPEIRRARAAFKQGVLDHLGYLEAMREQVRIAIDKQLAYGLDVLVHGEAERNDMVEYFGELLWGFAITSNGWVQSYGSRCVKPPLVYGDVYLPEPMTVGWASYAQSLSAKPVKGMLTGPVTMLQWSFVRDDQPRATTALQIALALRQETLDLEKAGIGMIQIDEPALREGLPLKARERAAYLDWAVRAFGIAASGVADDTQIHTHMCYSEFGDILPSIAALDADVISIETTRSNMELLDAFETFDYPNEIGPGVYDIHSPRVPDADEIERLILLALERIPAQRLWVNPDCGLKTREWRQVDAALAAMVDAAKRVRQKVEEAVPA.

5-methyltetrahydropteroyltri-L-glutamate contacts are provided by residues 16–19 (RELK) and lysine 115. Residues 435–437 (IGS) and glutamate 488 contribute to the L-homocysteine site. Residues 435–437 (IGS) and glutamate 488 contribute to the L-methionine site. 5-methyltetrahydropteroyltri-L-glutamate-binding positions include 519 to 520 (RC) and tryptophan 565. L-homocysteine is bound at residue aspartate 603. An L-methionine-binding site is contributed by aspartate 603. Glutamate 609 is a 5-methyltetrahydropteroyltri-L-glutamate binding site. Positions 645, 647, and 669 each coordinate Zn(2+). Histidine 698 acts as the Proton donor in catalysis. Zn(2+) is bound at residue cysteine 730.

The protein belongs to the vitamin-B12 independent methionine synthase family. Zn(2+) is required as a cofactor.

It carries out the reaction 5-methyltetrahydropteroyltri-L-glutamate + L-homocysteine = tetrahydropteroyltri-L-glutamate + L-methionine. It participates in amino-acid biosynthesis; L-methionine biosynthesis via de novo pathway; L-methionine from L-homocysteine (MetE route): step 1/1. In terms of biological role, catalyzes the transfer of a methyl group from 5-methyltetrahydrofolate to homocysteine resulting in methionine formation. The sequence is that of 5-methyltetrahydropteroyltriglutamate--homocysteine methyltransferase from Burkholderia pseudomallei (strain 1106a).